Consider the following 407-residue polypeptide: MAAKMEITLSSNTEASSKQERHIIAKLEEKRGPPLQKNCPDPELCRQSFRRFCYQEVSGPQEALSQLRQLCRQWLQPELHTKEQILELLVMEQFLTILPPEIQARVRHRCPMSSKEIVTLVEDFHRASKKPKQWVAVCMQGQKVLLEKTGSQLGEQELPDFQPQTPRRDLRESSPAEPSQAGAYDRLSPHHWEKSPLLQEPTPKLAGTEAPRMRSDNKENPQQEGAKGAKPCAVSAGRSKGNGLQNPEPRGANMSEPRLSRRQVSSPNAQKPFAHYQRHCRVEYISSPLKSHPLRELKKSKGGKRSLSNRLQHLGHQPTRSAKKPYKCDDCGKSFTWNSELKRHKRVHTGERPYTCGECGNCFGRQSTLKLHQRIHTGEKPYQCGQCGKSFRQSSNLHQHHRLHHGD.

The disordered stretch occupies residues 1–20 (MAAKMEITLSSNTEASSKQE). Lys-26 participates in a covalent cross-link: Glycyl lysine isopeptide (Lys-Gly) (interchain with G-Cter in SUMO2). The SCAN box domain occupies 59–124 (GPQEALSQLR…KEIVTLVEDF (66 aa)). The disordered stretch occupies residues 150–270 (GSQLGEQELP…RRQVSSPNAQ (121 aa)). Lys-204 participates in a covalent cross-link: Glycyl lysine isopeptide (Lys-Gly) (interchain with G-Cter in SUMO2). Over residues 211–221 (PRMRSDNKENP) the composition is skewed to basic and acidic residues. Residues Lys-230 and Lys-271 each participate in a glycyl lysine isopeptide (Lys-Gly) (interchain with G-Cter in SUMO2) cross-link. 3 consecutive C2H2-type zinc fingers follow at residues 326-348 (YKCD…KRVH), 354-376 (YTCG…QRIH), and 382-405 (YQCG…RLHH).

It belongs to the krueppel C2H2-type zinc-finger protein family. As to quaternary structure, homodimer. Expressed in a variety of organs, but most strongly in adult testis and ovary followed by small intestine, colon, prostate, thymus, spleen, pancreas, skeletal muscle, heart, brain and kidney. Also expressed in umbilical vein endothelial cells, foreskin fibroblast and Hep-G2 cells.

It localises to the nucleus. Its function is as follows. Transcriptional repressor. The sequence is that of Zinc finger protein 174 (ZNF174) from Homo sapiens (Human).